The sequence spans 528 residues: MIKKVLQLLIFHLTLAEIVLSGNVVVWPTDGSHWLNIKILLEELVQRNHSVTVLAPSETLFINSRLDAFINFEEIPVSYTKSKIDEIIEHMIALWLDHRPTPLTMWTFYKELGNLLATFYTTNKQMCDGVLNNPTVMERLQKGGFDVLLADPVTMCGELVALKLGIPFVYTLRFSPAFTVERHCGKIPAPISYVPAALSELTDQMSFGERVKNIISYSLQDYIFKTYWGEWNSYYSKVLGRPTTLCETMGKAEIWLMRTYWDFEFPRPYLPNFEFVGGLHCKPAKPLPKEMEEFVQTSGEHGIVVFSLGSMVKNLTDEKANLIASALAQIPQKVLWRYKGKIPDTLGSNTRLFDWIPQNDLLGHPKTRAFITHGGTNGIYEAIYHGIPMVGVPMFADQPDNIAHMKAKGAAVEVNMNTMTSSDLLNALRTVINEPSYKENAMRLSRIHHDQPVKPLDRAVFWIEFVMRHKGAKHLRVAAHDLSWFQYHSLDVIGFLLACVASAILLVAKCCLFIFQKVGKTGKKKKRD.

The first 21 residues, Met-1 to Ser-21, serve as a signal peptide directing secretion. Residues Gly-22 to Gly-494 are Extracellular-facing. 2 N-linked (GlcNAc...) asparagine glycosylation sites follow: Asn-48 and Asn-314. A helical membrane pass occupies residues Phe-495–Phe-515. The Cytoplasmic portion of the chain corresponds to Gln-516–Asp-528.

This sequence belongs to the UDP-glycosyltransferase family.

The protein localises to the membrane. The enzyme catalyses glucuronate acceptor + UDP-alpha-D-glucuronate = acceptor beta-D-glucuronoside + UDP + H(+). The catalysed reaction is 17alpha-estradiol + UDP-alpha-D-glucuronate = 17alpha-estradiol 3-O-(beta-D-glucuronate) + UDP + H(+). It carries out the reaction 17beta-estradiol + UDP-alpha-D-glucuronate = 17beta-estradiol 3-O-(beta-D-glucuronate) + UDP + H(+). It catalyses the reaction chenodeoxycholate + UDP-alpha-D-glucuronate = chenodeoxycholoyl-24-O-(beta-D-glucuronate) + UDP. The enzyme catalyses lithocholate + UDP-alpha-D-glucuronate = lithocholoyl-24-O-(beta-D-glucuronate) + UDP. The catalysed reaction is deoxycholate + UDP-alpha-D-glucuronate = deoxycholoyl-24-O-(beta-D-glucuronate) + UDP. It carries out the reaction hyocholate + UDP-alpha-D-glucuronate = hyocholoyl-24-O-(beta-D-glucuronate) + UDP. It catalyses the reaction hyodeoxycholate + UDP-alpha-D-glucuronate = hyodeoxycholate 6-O-(beta-D-glucuronate) + UDP + H(+). Its function is as follows. UDP-glucuronosyltransferase (UGT) that catalyzes phase II biotransformation reactions in which lipophilic substrates are conjugated with glucuronic acid to increase the metabolite's water solubility, thereby facilitating excretion into either the urine or bile. Essential for the elimination and detoxification of drugs, xenobiotics and endogenous compounds. Catalyzes the glucuronidation of endogenous estrogen hormone estradiol. Contributes to bile acid (BA) detoxification by catalyzing the glucuronidation of BA substrates, which are natural detergents for dietary lipids absorption. Potential role in detoxification of toxic waste compounds in the amniotic fluid before birth, and air-born chemical after birth. This is UDP-glucuronosyltransferase 2A2 from Mus musculus (Mouse).